Reading from the N-terminus, the 357-residue chain is Arginine kinase (357 aa).

N-acetylalanine is present on alanine 2. Residues 9 to 91 enclose the Phosphagen kinase N-terminal domain; the sequence is KLEEGFKKLQ…FDPIIEDYHK (83 aa). 64–68 serves as a coordination point for L-arginine; the sequence is GVGVY. Residues 119–356 form the Phosphagen kinase C-terminal domain; sequence FVISTRVRCG…LELIKIEKEM (238 aa). ATP contacts are provided by residues 122 to 126 and histidine 185; that span reads STRVR. Position 225 (glutamate 225) interacts with L-arginine. Position 229 (arginine 229) interacts with ATP. Cysteine 271 is an L-arginine binding site. ATP contacts are provided by residues 280-284 and 309-314; these read RASVH and RGTRGE. Glutamate 314 is an L-arginine binding site.

This sequence belongs to the ATP:guanido phosphotransferase family.

The enzyme catalyses L-arginine + ATP = N(omega)-phospho-L-arginine + ADP + H(+). The protein is Arginine kinase of Pachygrapsus marmoratus (Marbled rock crab).